Consider the following 135-residue polypeptide: Large ribosomal subunit protein uL18c (135 aa).

Belongs to the universal ribosomal protein uL18 family. Part of the 50S ribosomal subunit; contacts the 5S rRNA.

Its subcellular location is the plastid. The protein localises to the chloroplast. Its function is as follows. Binds 5S rRNA, forms part of the central protuberance of the 50S subunit. The protein is Large ribosomal subunit protein uL18c (rpl18) of Phaeodactylum tricornutum (strain CCAP 1055/1).